Here is a 267-residue protein sequence, read N- to C-terminus: Interleukin-2 receptor subunit alpha (267 aa).

A signal peptide spans 1-21 (MEPHLLMLGFLSFTIVPGCWA). Positions 22-79 (ELCLYDPPEVPNATFKALSYKNGTILNCECKRGFRRLNELVYMACLGNSWSNNCQCTS) constitute a Sushi 1 domain. At 22 to 235 (ELCLYDPPEV…ETFVFTKEYQ (214 aa)) the chain is on the extracellular side. Disulfide bonds link cysteine 24-cysteine 66, cysteine 49-cysteine 75, and cysteine 51-cysteine 77. N-linked (GlcNAc...) asparagine glycosylation is found at asparagine 33 and asparagine 43. Positions 82–93 (HDNSREQVTPQP) are enriched in polar residues. The interval 82-108 (HDNSREQVTPQPEGQKEQQTTDTQKST) is disordered. Low complexity predominate over residues 98–108 (EQQTTDTQKST). Positions 118–181 (GHCREPPPWR…WTHPQLTCVD (64 aa)) constitute a Sushi 2 domain. Intrachain disulfides connect cysteine 120-cysteine 163 and cysteine 147-cysteine 179. Positions 191–215 (SEESQGSRNSFPESEASCPTPNTDF) are disordered. A compositionally biased stretch (polar residues) spans 192–215 (EESQGSRNSFPESEASCPTPNTDF). Residues 236–256 (VAVASCIFLLLSILLLSGFTW) traverse the membrane as a helical segment. At 257–267 (QHRWRKSRRTI) the chain is on the cytoplasmic side.

As to quaternary structure, non-covalent dimer of an alpha and a beta subunit. IL2R exists in 3 different forms: a high affinity dimer, an intermediate affinity monomer (beta subunit), and a low affinity monomer (alpha subunit). The high and intermediate affinity forms also associate with a gamma subunit.

It localises to the membrane. In terms of biological role, receptor for interleukin-2. The receptor is involved in the regulation of immune tolerance by controlling regulatory T cells (TREGs) activity. TREGs suppress the activation and expansion of autoreactive T-cells. This is Interleukin-2 receptor subunit alpha (Il2ra) from Rattus norvegicus (Rat).